We begin with the raw amino-acid sequence, 671 residues long: UvrABC system protein B (671 aa).

Positions 25-412 (EGIDAGLAHQ…AGRIVEQVVR (388 aa)) constitute a Helicase ATP-binding domain. 38 to 45 (GVTGSGKT) contributes to the ATP binding site. The Beta-hairpin signature appears at 91 to 114 (YYDYYQPEAYVPSSDTFIEKDASI). Residues 429–582 (QVDDLLSEIH…QIAFNLEHGI (154 aa)) enclose the Helicase C-terminal domain. Positions 601 to 624 (PGSRSKKRKGMAKAAEENARYENE) are disordered. Basic and acidic residues predominate over residues 614-624 (AAEENARYENE). The region spanning 632-667 (NKRIRQLEEKMYQLARDLEFEAAAQMRDEIGKLRER) is the UVR domain.

The protein belongs to the UvrB family. As to quaternary structure, forms a heterotetramer with UvrA during the search for lesions. Interacts with UvrC in an incision complex.

It localises to the cytoplasm. Functionally, the UvrABC repair system catalyzes the recognition and processing of DNA lesions. A damage recognition complex composed of 2 UvrA and 2 UvrB subunits scans DNA for abnormalities. Upon binding of the UvrA(2)B(2) complex to a putative damaged site, the DNA wraps around one UvrB monomer. DNA wrap is dependent on ATP binding by UvrB and probably causes local melting of the DNA helix, facilitating insertion of UvrB beta-hairpin between the DNA strands. Then UvrB probes one DNA strand for the presence of a lesion. If a lesion is found the UvrA subunits dissociate and the UvrB-DNA preincision complex is formed. This complex is subsequently bound by UvrC and the second UvrB is released. If no lesion is found, the DNA wraps around the other UvrB subunit that will check the other stand for damage. This chain is UvrABC system protein B, found in Pseudomonas syringae pv. syringae (strain B728a).